A 252-amino-acid polypeptide reads, in one-letter code: Phosphoribosylaminoimidazole-succinocarboxamide synthase 1 (252 aa).

The protein belongs to the SAICAR synthetase family.

The enzyme catalyses 5-amino-1-(5-phospho-D-ribosyl)imidazole-4-carboxylate + L-aspartate + ATP = (2S)-2-[5-amino-1-(5-phospho-beta-D-ribosyl)imidazole-4-carboxamido]succinate + ADP + phosphate + 2 H(+). The protein operates within purine metabolism; IMP biosynthesis via de novo pathway; 5-amino-1-(5-phospho-D-ribosyl)imidazole-4-carboxamide from 5-amino-1-(5-phospho-D-ribosyl)imidazole-4-carboxylate: step 1/2. The protein is Phosphoribosylaminoimidazole-succinocarboxamide synthase 1 (purC1) of Caulobacter vibrioides (strain ATCC 19089 / CIP 103742 / CB 15) (Caulobacter crescentus).